The sequence spans 196 residues: Small ribosomal subunit protein uS4c (196 aa).

The disordered stretch occupies residues 17 to 36 (ALPGLTRKTPKSGSNLKKKF). The S4 RNA-binding domain occupies 89-150 (MRLDNIVFRL…NQRSKRLVQN (62 aa)).

It belongs to the universal ribosomal protein uS4 family. In terms of assembly, part of the 30S ribosomal subunit. Contacts protein S5. The interaction surface between S4 and S5 is involved in control of translational fidelity.

It localises to the plastid. It is found in the chloroplast. Its function is as follows. One of the primary rRNA binding proteins, it binds directly to 16S rRNA where it nucleates assembly of the body of the 30S subunit. With S5 and S12 plays an important role in translational accuracy. The chain is Small ribosomal subunit protein uS4c (rps4) from Tragus racemosus (Carrot grass).